Consider the following 518-residue polypeptide: Bifunctional enzyme NanE/NanK (518 aa).

Positions 1 to 234 (MCRVQGMIEE…DAVESAAKPS (234 aa)) are manNAc-6-P epimerase. The manNAc kinase stretch occupies residues 235-518 (SPVLAFDIGG…VADLAATYFS (284 aa)). ATP contacts are provided by residues 239–246 (AFDIGGTK) and 365–372 (GIGGGIVL).

This sequence in the N-terminal section; belongs to the NanE family. It in the C-terminal section; belongs to the ROK (NagC/XylR) family. NanK subfamily.

It catalyses the reaction an N-acyl-D-glucosamine 6-phosphate = an N-acyl-D-mannosamine 6-phosphate. The enzyme catalyses an N-acyl-D-mannosamine + ATP = an N-acyl-D-mannosamine 6-phosphate + ADP + H(+). It functions in the pathway amino-sugar metabolism; N-acetylneuraminate degradation; D-fructose 6-phosphate from N-acetylneuraminate: step 2/5. It participates in amino-sugar metabolism; N-acetylneuraminate degradation; D-fructose 6-phosphate from N-acetylneuraminate: step 3/5. Converts N-acetylmannosamine-6-phosphate (ManNAc-6-P) to N-acetylglucosamine-6-phosphate (GlcNAc-6-P). Its function is as follows. Catalyzes the phosphorylation of N-acetylmannosamine (ManNAc) to ManNAc-6-P. This Brucella melitensis biotype 1 (strain ATCC 23456 / CCUG 17765 / NCTC 10094 / 16M) protein is Bifunctional enzyme NanE/NanK (nanEK).